The sequence spans 252 residues: Putative peptide zinc metalloprotease protein YydH (252 aa).

Helical transmembrane passes span 56–76 and 85–105; these read FFYL…IHLI and VFYG…NIVL. His-106 lines the Zn(2+) pocket. The active site involves Glu-107. His-110 serves as a coordination point for Zn(2+). The next 3 membrane-spanning stretches (helical) occupy residues 152–172, 181–201, and 231–251; these read IIVH…LELI, ALTM…IPIL, and IQII…LYIV.

This sequence belongs to the peptidase M50B family. It depends on Zn(2+) as a cofactor.

The protein localises to the cell membrane. In terms of biological role, required for production of the modified peptide YydF. May process the precursor form of YydF to release the active peptide (Potential). This is Putative peptide zinc metalloprotease protein YydH (yydH) from Bacillus subtilis (strain 168).